A 305-amino-acid chain; its full sequence is Protoheme IX farnesyltransferase 1 (305 aa).

The next 8 helical transmembrane spans lie at 22–42 (IKTG…TLAL), 53–73 (IPEI…AGAF), 94–114 (VTGD…TIFG), 115–135 (LVFL…GLFL), 154–174 (IGSV…YPDV), 179–199 (IIGL…AIAI), 230–250 (LVIL…LMLV), and 283–303 (LFHM…GIFF).

The protein belongs to the UbiA prenyltransferase family. Protoheme IX farnesyltransferase subfamily. Interacts with CtaA.

The protein localises to the cell membrane. It carries out the reaction heme b + (2E,6E)-farnesyl diphosphate + H2O = Fe(II)-heme o + diphosphate. It functions in the pathway porphyrin-containing compound metabolism; heme O biosynthesis; heme O from protoheme: step 1/1. Functionally, converts heme B (protoheme IX) to heme O by substitution of the vinyl group on carbon 2 of heme B porphyrin ring with a hydroxyethyl farnesyl side group. This chain is Protoheme IX farnesyltransferase 1, found in Bacillus cytotoxicus (strain DSM 22905 / CIP 110041 / 391-98 / NVH 391-98).